Reading from the N-terminus, the 173-residue chain is Large ribosomal subunit protein bL9 (173 aa).

It belongs to the bacterial ribosomal protein bL9 family.

In terms of biological role, binds to the 23S rRNA. This chain is Large ribosomal subunit protein bL9, found in Rickettsia bellii (strain RML369-C).